A 116-amino-acid chain; its full sequence is Large ribosomal subunit protein bL20 (116 aa).

The protein belongs to the bacterial ribosomal protein bL20 family.

Binds directly to 23S ribosomal RNA and is necessary for the in vitro assembly process of the 50S ribosomal subunit. It is not involved in the protein synthesizing functions of that subunit. The polypeptide is Large ribosomal subunit protein bL20 (Desulfatibacillum aliphaticivorans).